A 563-amino-acid polypeptide reads, in one-letter code: Eukaryotic translation initiation factor 3 subunit D (563 aa).

Positions 95–136 (PGYMRNRNRFNQRGGYRRDNRGGRFQGQGGNMGMQNLSRGRD) are disordered. Positions 294–308 (EFDLLTVGETANDLN) are RNA gate. The tract at residues 528–563 (IPNSTFETDEEDDDDDEDDVENDDGDDEKDEGDGED) is disordered. A compositionally biased stretch (acidic residues) spans 534 to 563 (ETDEEDDDDDEDDVENDDGDDEKDEGDGED).

The protein belongs to the eIF-3 subunit D family. Component of the eukaryotic translation initiation factor 3 (eIF-3) complex.

It is found in the cytoplasm. Functionally, mRNA cap-binding component of the eukaryotic translation initiation factor 3 (eIF-3) complex, which is involved in protein synthesis of a specialized repertoire of mRNAs and, together with other initiation factors, stimulates binding of mRNA and methionyl-tRNAi to the 40S ribosome. The eIF-3 complex specifically targets and initiates translation of a subset of mRNAs involved in cell proliferation. In the eIF-3 complex, eif3d specifically recognizes and binds the 7-methylguanosine cap of a subset of mRNAs. This is Eukaryotic translation initiation factor 3 subunit D from Nematostella vectensis (Starlet sea anemone).